A 51-amino-acid polypeptide reads, in one-letter code: AAHGGPPFEPHATVVGAVAAAAAADVAPYTATTPYMPHVSLLYGDLTDEEK.

Residue His11 is the Proton donor/acceptor of the active site. Residue Thr13 coordinates substrate. His38 functions as the Proton donor/acceptor in the catalytic mechanism. Ser40 and Tyr43 together coordinate substrate.

The protein belongs to the 2H phosphoesterase superfamily. CPD1 family.

Hydrolyzes ADP-ribose 1'',2''-cyclic phosphate (Appr&gt;1) that is produced during tRNA splicing into ADP-ribose 1''-phosphate (Appr-1''p). The polypeptide is Cyclic phosphodiesterase (Triticum aestivum (Wheat)).